The sequence spans 551 residues: Protein ROOT HAIR SPECIFIC 17 (551 aa).

A helical; Signal-anchor for type II membrane protein membrane pass occupies residues 39-59 (LFPLVSAVSGCLLLILFSFST). N-linked (GlcNAc...) asparagine glycosylation is found at asparagine 109 and asparagine 153. 293-295 (HLR) contributes to the substrate binding site. Asparagine 405 and asparagine 465 each carry an N-linked (GlcNAc...) asparagine glycan. Residues 515–539 (KAKHVNEDDSSEYSEIGNVPISSRS) form a disordered region.

It belongs to the glycosyltransferase GT106 family. As to expression, specifically expressed in the root hair.

The protein localises to the membrane. The protein operates within glycan metabolism. In Arabidopsis thaliana (Mouse-ear cress), this protein is Protein ROOT HAIR SPECIFIC 17.